A 331-amino-acid chain; its full sequence is Flavonol synthase 1 (331 aa).

The Fe2OG dioxygenase domain occupies 191 to 292 (DAIELLLKIN…RMSWPVFCSP (102 aa)). Fe cation is bound by residues H217, D219, and H273. R283 is a 2-oxoglutarate binding site.

The protein belongs to the iron/ascorbate-dependent oxidoreductase family. L-ascorbate serves as cofactor. Fe(2+) is required as a cofactor. As to expression, expressed in young cromes.

The enzyme catalyses a (2R,3R)-dihydroflavonol + 2-oxoglutarate + O2 = a flavonol + succinate + CO2 + H2O. The catalysed reaction is (2R,3R)-dihydrokaempferol + 2-oxoglutarate + O2 = kaempferol + succinate + CO2 + H2O + H(+). It catalyses the reaction (2R,3R)-dihydroquercetin + 2-oxoglutarate + O2 = quercetin + succinate + CO2 + H2O + H(+). It carries out the reaction (2R,3R)-dihydromyricetin + 2-oxoglutarate + O2 = myricetin + succinate + CO2 + H2O + H(+). It functions in the pathway flavonoid metabolism. Functionally, catalyzes the formation of flavonols from dihydroflavonols. Can act on dihydrokaempferol to produce kaempferol, on dihydroquercetin to produce quercitin and on dihydromyricetin to produce myricetin. The polypeptide is Flavonol synthase 1 (Crocosmia x crocosmiiflora (Montbretia)).